A 399-amino-acid chain; its full sequence is LEM domain-containing protein Bocksbeutel (399 aa).

The LEM domain maps to 4–48; that stretch reads LSYLDTLGNKELLAKCLEHGLPGVPVTDSTRSVIIRRLKAKITGV. Disordered regions lie at residues 49–103, 119–141, and 233–287; these read PLNK…EQSR, SVQT…SYMV, and NSTS…SNLA. Polar residues-rich tracts occupy residues 68 to 77 and 89 to 99; these read HGSQVTTPTS and GRTSSNNNKIS. A compositionally biased stretch (polar residues) spans 233-256; sequence NSTSYEESSTYNPKLSPISPRNTF. Residues 377-397 traverse the membrane as a helical segment; it reads FYLILVVSVMLATMVYVVLTP.

The protein resides in the nucleus inner membrane. The protein localises to the cytoplasm. It is found in the nucleus. It localises to the nucleoplasm. Its subcellular location is the endoplasmic reticulum. In terms of biological role, inner nuclear membrane protein. May have a role in maintaining the structural integrity of the nuclear lamina. During pupal development, plays essential and redundant functions with the other LEM domain proteins; MAN1 and Ote. Also has a redundant but important role with Ote in larval development. This is LEM domain-containing protein Bocksbeutel from Drosophila melanogaster (Fruit fly).